Reading from the N-terminus, the 205-residue chain is Adenylyl-sulfate kinase (205 aa).

Residue 31–38 participates in ATP binding; it reads GLSGAGKS. The active-site Phosphoserine intermediate is S105.

It belongs to the APS kinase family.

The enzyme catalyses adenosine 5'-phosphosulfate + ATP = 3'-phosphoadenylyl sulfate + ADP + H(+). It functions in the pathway sulfur metabolism; hydrogen sulfide biosynthesis; sulfite from sulfate: step 2/3. Functionally, catalyzes the synthesis of activated sulfate. This is Adenylyl-sulfate kinase from Shewanella baltica (strain OS195).